A 421-amino-acid chain; its full sequence is Gamma-glutamyl phosphate reductase (421 aa).

This sequence belongs to the gamma-glutamyl phosphate reductase family.

The protein localises to the cytoplasm. It carries out the reaction L-glutamate 5-semialdehyde + phosphate + NADP(+) = L-glutamyl 5-phosphate + NADPH + H(+). It participates in amino-acid biosynthesis; L-proline biosynthesis; L-glutamate 5-semialdehyde from L-glutamate: step 2/2. Catalyzes the NADPH-dependent reduction of L-glutamate 5-phosphate into L-glutamate 5-semialdehyde and phosphate. The product spontaneously undergoes cyclization to form 1-pyrroline-5-carboxylate. In Nitrosospira multiformis (strain ATCC 25196 / NCIMB 11849 / C 71), this protein is Gamma-glutamyl phosphate reductase.